Here is a 344-residue protein sequence, read N- to C-terminus: 4-hydroxy-2-oxovalerate aldolase (344 aa).

One can recognise a Pyruvate carboxyltransferase domain in the interval 8–260 (VTLHDMSLRD…NHGIDLYKIM (253 aa)). 16-17 (RD) is a substrate binding site. Position 17 (aspartate 17) interacts with Mn(2+). Histidine 20 functions as the Proton acceptor in the catalytic mechanism. Residues serine 170 and histidine 199 each contribute to the substrate site. Mn(2+) contacts are provided by histidine 199 and histidine 201. Tyrosine 290 lines the substrate pocket.

It belongs to the 4-hydroxy-2-oxovalerate aldolase family.

The enzyme catalyses (S)-4-hydroxy-2-oxopentanoate = acetaldehyde + pyruvate. The protein is 4-hydroxy-2-oxovalerate aldolase (mhpE) of Pseudoalteromonas translucida (strain TAC 125).